We begin with the raw amino-acid sequence, 353 residues long: Endophilin-A1 (353 aa).

Residues 1 to 21 (MSVAGLKKQFHKATQKVSEKV) are membrane-binding amphipathic helix. The segment at 1 to 27 (MSVAGLKKQFHKATQKVSEKVGGAEGT) is disordered. Residues 1 to 125 (MSVAGLKKQF…DVGEAMKELS (125 aa)) form a binds and tubulates liposomes region. In terms of domain architecture, BAR spans 18-249 (SEKVGGAEGT…LEDRIKEASS (232 aa)). The tract at residues 60-87 (PNPASRAKLSMINTMSKIRGQEKGPGYP) is required for dimerization upon membrane association. The stretch at 181–201 (EELRQALEKFDESKEIAESSM) forms a coiled coil. Residues 243–257 (RIKEASSQPKREYQP) show a composition bias toward basic and acidic residues. The disordered stretch occupies residues 243–290 (RIKEASSQPKREYQPKPRMSLDFTSGGDNTQHNGGISHATTPKPAGAH). Residues 264–282 (DFTSGGDNTQHNGGISHAT) are compositionally biased toward polar residues. In terms of domain architecture, SH3 spans 291–350 (MDQPCCRALYDFEPENEGELGFKEGDIITLTNQIDENWYEGMLHGQSGFFPINYVDILVP).

It belongs to the endophilin family. As to quaternary structure, monomer; in cytoplasm. Homodimer; when associated with membranes. Associates with MAP4K3. This interaction appears to regulate MAP4K3-mediated JNK activation. Interacts with SYNJ1 and DNM1. In terms of tissue distribution, highly expressed in brain.

The protein localises to the cytoplasm. It localises to the membrane. Its subcellular location is the early endosome. It is found in the presynapse. Its function is as follows. Implicated in synaptic vesicle endocytosis. May recruit other proteins to membranes with high curvature. This Gallus gallus (Chicken) protein is Endophilin-A1.